A 280-amino-acid chain; its full sequence is Putative pyruvate, phosphate dikinase regulatory protein (280 aa).

154–161 lines the ADP pocket; that stretch reads GVSRTSKT.

This sequence belongs to the pyruvate, phosphate/water dikinase regulatory protein family. PDRP subfamily.

The enzyme catalyses N(tele)-phospho-L-histidyl/L-threonyl-[pyruvate, phosphate dikinase] + ADP = N(tele)-phospho-L-histidyl/O-phospho-L-threonyl-[pyruvate, phosphate dikinase] + AMP + H(+). The catalysed reaction is N(tele)-phospho-L-histidyl/O-phospho-L-threonyl-[pyruvate, phosphate dikinase] + phosphate + H(+) = N(tele)-phospho-L-histidyl/L-threonyl-[pyruvate, phosphate dikinase] + diphosphate. Its function is as follows. Bifunctional serine/threonine kinase and phosphorylase involved in the regulation of the pyruvate, phosphate dikinase (PPDK) by catalyzing its phosphorylation/dephosphorylation. The protein is Putative pyruvate, phosphate dikinase regulatory protein of Nitrobacter winogradskyi (strain ATCC 25391 / DSM 10237 / CIP 104748 / NCIMB 11846 / Nb-255).